Consider the following 99-residue polypeptide: NADH-quinone oxidoreductase subunit K (99 aa).

3 consecutive transmembrane segments (helical) span residues 3–23 (PINY…GVLL), 28–48 (IVMF…FVTF), and 59–79 (MIAF…LAII).

The protein belongs to the complex I subunit 4L family. In terms of assembly, NDH-1 is composed of 14 different subunits. Subunits NuoA, H, J, K, L, M, N constitute the membrane sector of the complex.

The protein localises to the cell membrane. It catalyses the reaction a quinone + NADH + 5 H(+)(in) = a quinol + NAD(+) + 4 H(+)(out). NDH-1 shuttles electrons from NADH, via FMN and iron-sulfur (Fe-S) centers, to quinones in the respiratory chain. The immediate electron acceptor for the enzyme in this species is believed to be a menaquinone. Couples the redox reaction to proton translocation (for every two electrons transferred, four hydrogen ions are translocated across the cytoplasmic membrane), and thus conserves the redox energy in a proton gradient. The sequence is that of NADH-quinone oxidoreductase subunit K from Mycobacterium avium (strain 104).